The chain runs to 585 residues: Putative ABC transporter ATP-binding protein MG187 (585 aa).

Positions 8–468 (IELKNIVVDF…PANEFVARFL (461 aa)) constitute an ABC transporter domain. 40–47 (GPSGCGKT) lines the ATP pocket.

This sequence belongs to the ABC transporter superfamily.

This Mycoplasma genitalium (strain ATCC 33530 / DSM 19775 / NCTC 10195 / G37) (Mycoplasmoides genitalium) protein is Putative ABC transporter ATP-binding protein MG187.